The primary structure comprises 459 residues: N-chimaerin (459 aa).

The residue at position 2 (Ala-2) is an N-acetylalanine. An SH2 domain is found at 49-135 (EYHGMISREE…IETKAAEYIA (87 aa)). Residue Thr-192 is modified to Phosphothreonine. The segment at 205-255 (VHNFKVHTFRGPHWCEYCANFMWGLIAQGVKCADCGLNVHKQCSKMVPNDC) adopts a Phorbol-ester/DAG-type zinc-finger fold. In terms of domain architecture, Rho-GAP spans 268 to 459 (CDLTTLVKAH…LLIKNEDILF (192 aa)). Thr-340 carries the phosphothreonine modification.

Interacts with EPHA4; effector of EPHA4 in axon guidance linking EPHA4 activation to RAC1 regulation. May also interact with EPHB1 and EPHB2. Post-translationally, phosphorylated. Phosphorylation is EPHA4 kinase activity-dependent.

Functionally, GTPase-activating protein for p21-rac and a phorbol ester receptor. May play an important role in neuronal signal-transduction mechanisms. Involved in the assembly of neuronal locomotor circuits as a direct effector of EPHA4 in axon guidance. The protein is N-chimaerin (Chn1) of Mus musculus (Mouse).